The following is a 330-amino-acid chain: MSTASAFAINAPSFVNASSLKKSSTSSARSGVLSARFTCNSSSSSSSATPPSLIRNEPVFAAPAPIITPNWTEDGNESYEEAIDALKKMLIEKGELEPVAAARIDQITAQAAAPDTKAPFDPVERIKSGFVKFKTEKFVTNPALYDELAKGQSPKFMVFACSDSRVCPSHVLDFQPGEAFVVRNVANMVPPFDKTKYSGVGAAVEYAVLHLKVQEIFVIGHSRCGGIKGLMTFPDEGPHSTDFIEDWVKVCLPAKSKVVAEHNGTHLDDQCVQCEKEAVNVSLGNLLTYPFVRDGLRNNTLALKGGHYDFVNGTFELWALDFGLSSPTSV.

The tract at residues 1 to 109 (MSTASAFAIN…AAARIDQITA (109 aa)) is chloroplast transit peptide-like.

This sequence belongs to the beta-class carbonic anhydrase family. As to quaternary structure, homohexamer.

The protein localises to the cytoplasm. It carries out the reaction hydrogencarbonate + H(+) = CO2 + H2O. In terms of biological role, reversible hydration of carbon dioxide. The chain is Carbonic anhydrase 1 from Flaveria linearis (Narrowleaf yellowtops).